The primary structure comprises 295 residues: MQIVVASYGARIRAKKGLLIVEGREGRREYPLHQVDEVLLLTGGISISTRALRALLRAGAVVAVFDQRGEPLGIFMKPVGDATGAKRLCQYAAATDGRGLQLAKKWVWLKIRGQLENLKRWRRRLGKYGTYAESISKAINALASAATPREVMEAEAAAAEAYWAAYREITGFPGRDQEGRDPVNAGLNYGYGILKALCFKSILLAGLDPYVGFLHADKSGRPSLVLDFMEQWRPRVDAVVAQLAEELEAENGLLTHKSRLRLAAAVLEEFNATGRPLSAEIHREARSIAKALCTS.

Mn(2+)-binding residues include E155, H215, and E230.

This sequence belongs to the CRISPR-associated endonuclease Cas1 family. Homodimer, forms a heterotetramer with a Cas2 homodimer. Requires Mg(2+) as cofactor. The cofactor is Mn(2+).

In terms of biological role, CRISPR (clustered regularly interspaced short palindromic repeat), is an adaptive immune system that provides protection against mobile genetic elements (viruses, transposable elements and conjugative plasmids). CRISPR clusters contain spacers, sequences complementary to antecedent mobile elements, and target invading nucleic acids. CRISPR clusters are transcribed and processed into CRISPR RNA (crRNA). Acts as a dsDNA endonuclease. Involved in the integration of spacer DNA into the CRISPR cassette. This is CRISPR-associated endonuclease Cas1 2 from Pyrobaculum aerophilum (strain ATCC 51768 / DSM 7523 / JCM 9630 / CIP 104966 / NBRC 100827 / IM2).